We begin with the raw amino-acid sequence, 111 residues long: Ribosome-binding factor A (111 aa).

This sequence belongs to the RbfA family. In terms of assembly, monomer. Binds 30S ribosomal subunits, but not 50S ribosomal subunits or 70S ribosomes.

The protein resides in the cytoplasm. One of several proteins that assist in the late maturation steps of the functional core of the 30S ribosomal subunit. Associates with free 30S ribosomal subunits (but not with 30S subunits that are part of 70S ribosomes or polysomes). Required for efficient processing of 16S rRNA. May interact with the 5'-terminal helix region of 16S rRNA. The polypeptide is Ribosome-binding factor A (Helicobacter pylori (strain J99 / ATCC 700824) (Campylobacter pylori J99)).